The following is a 147-amino-acid chain: Receptor activity-modifying protein 3 (147 aa).

The signal sequence occupies residues 1-22; sequence MKTPAQRLHLLPLLLLLCGECA. At 23–112 the chain is on the extracellular side; that stretch reads QVCGCNETGM…CTVDRTHWED (90 aa). Asn28, Asn57, Asn70, and Asn102 each carry an N-linked (GlcNAc...) asparagine glycan. Intrachain disulfides connect Cys39/Cys71 and Cys56/Cys103. The helical transmembrane segment at 113–137 threads the bilayer; the sequence is PPDEVLIPLIAVPVVLTVAMAGLVV. The Cytoplasmic segment spans residues 138-147; sequence WRSKHTDRLL.

It belongs to the RAMP family. Heterodimer of CALCRL and RAMP3; interaction induces allosteric modulation of CALCRL function and ligand specificity for adrenomedullin/ADM and intermedin/ADM2. Heterodimer of CALCR and RAMP3; interaction form the receptor complex AMYR3 for amylin/IAPP. Interacts with GPER1. Expressed predominantly in the testis, embryonic and adult brain and in kidney.

It localises to the cell membrane. It is found in the membrane. Functionally, accessory protein that interacts with and modulates the function of G-protein coupled receptors including calcitonin gene-related peptide type 1 receptor (CALCRL), calcitonin receptor (CALCR) and G-protein coupled estrogen receptor 1 (GPER1). Required for the transport of CALCRL and GPER1 receptors to the plasma membrane. Plays a role in cardioprotection by reducing cardiac hypertrophy and perivascular fibrosis in a GPER1-dependent manner. Together with CALCRL, form a receptor complex for adrenomedullin/ADM and intermedin/ADM2. Together with CALCR, act as a receptor complex for amylin/IAPP. The chain is Receptor activity-modifying protein 3 from Mus musculus (Mouse).